A 238-amino-acid polypeptide reads, in one-letter code: Enolase-phosphatase E1 (238 aa).

Positions 14 and 16 each coordinate Mg(2+). Residues 128–129 (SS) and Lys-165 each bind substrate. Asp-192 is a binding site for Mg(2+).

It belongs to the HAD-like hydrolase superfamily. MasA/MtnC family. Monomer. It depends on Mg(2+) as a cofactor.

It localises to the cytoplasm. Its subcellular location is the nucleus. The catalysed reaction is 5-methylsulfanyl-2,3-dioxopentyl phosphate + H2O = 1,2-dihydroxy-5-(methylsulfanyl)pent-1-en-3-one + phosphate. It participates in amino-acid biosynthesis; L-methionine biosynthesis via salvage pathway; L-methionine from S-methyl-5-thio-alpha-D-ribose 1-phosphate: step 3/6. The protein operates within amino-acid biosynthesis; L-methionine biosynthesis via salvage pathway; L-methionine from S-methyl-5-thio-alpha-D-ribose 1-phosphate: step 4/6. Bifunctional enzyme that catalyzes the enolization of 2,3-diketo-5-methylthiopentyl-1-phosphate (DK-MTP-1-P) into the intermediate 2-hydroxy-3-keto-5-methylthiopentenyl-1-phosphate (HK-MTPenyl-1-P), which is then dephosphorylated to form the acireductone 1,2-dihydroxy-3-keto-5-methylthiopentene (DHK-MTPene). The chain is Enolase-phosphatase E1 from Fusarium vanettenii (strain ATCC MYA-4622 / CBS 123669 / FGSC 9596 / NRRL 45880 / 77-13-4) (Fusarium solani subsp. pisi).